Reading from the N-terminus, the 447-residue chain is UDP-glycosyltransferase 79B9 (447 aa).

UDP-alpha-D-glucose is bound by residues Ser260, 319 to 321, 336 to 344, and 358 to 361; these read VQQ, HCGFGSMWE, and LCDQ.

The protein belongs to the UDP-glycosyltransferase family.

This chain is UDP-glycosyltransferase 79B9 (UGT79B9), found in Arabidopsis thaliana (Mouse-ear cress).